We begin with the raw amino-acid sequence, 291 residues long: Tyrosine recombinase XerA (291 aa).

Residues 9–102 form the Core-binding (CB) domain; that stretch reads PESGDLYNAF…AVRRFLKWIN (94 aa). The Tyr recombinase domain occupies 115 to 279; the sequence is KEVKALDEIQ…VLDDLRNEYL (165 aa). Residues Arg-150, Lys-175, His-231, Arg-234, and His-257 contribute to the active site. Tyr-266 serves as the catalytic O-(3'-phospho-DNA)-tyrosine intermediate.

It belongs to the 'phage' integrase family. XerA subfamily.

The protein localises to the cytoplasm. Functionally, site-specific tyrosine recombinase, which acts by catalyzing the cutting and rejoining of the recombining DNA molecules. Probably involved in the resolution of chromosome dimers. Binds to the dif site. This Saccharolobus solfataricus (strain ATCC 35092 / DSM 1617 / JCM 11322 / P2) (Sulfolobus solfataricus) protein is Tyrosine recombinase XerA.